Here is a 358-residue protein sequence, read N- to C-terminus: WD repeat-containing protein 53 (358 aa).

WD repeat units follow at residues 1 to 38 (MAVK…AWGE), 43 to 80 (LGHT…VLDV), 85 to 123 (DSLD…ILDL), 127 to 166 (KVIR…LWSL), 173 to 225 (WITN…RIFR), and 232 to 270 (EQEL…LWDA). The segment at 273–311 (EVEKKQKSPTKRTHRKKPKRGTCTKQGGNTNASVTDEEE) is disordered. Residues 279–294 (KSPTKRTHRKKPKRGT) show a composition bias toward basic residues. Residues 295 to 306 (CTKQGGNTNASV) are compositionally biased toward polar residues. A WD 7 repeat occupies 314 to 355 (NILPKLNIEHGEKVNWLLGTKIKGHQNILVADQTSCISVYPL).

It belongs to the WD repeat WDR53 family.

The chain is WD repeat-containing protein 53 (WDR53) from Homo sapiens (Human).